The chain runs to 207 residues: Urease accessory protein UreG (207 aa).

A GTP-binding site is contributed by 16-23 (GPVGSGKT).

This sequence belongs to the SIMIBI class G3E GTPase family. UreG subfamily. In terms of assembly, homodimer. UreD, UreF and UreG form a complex that acts as a GTP-hydrolysis-dependent molecular chaperone, activating the urease apoprotein by helping to assemble the nickel containing metallocenter of UreC. The UreE protein probably delivers the nickel.

Its subcellular location is the cytoplasm. Facilitates the functional incorporation of the urease nickel metallocenter. This process requires GTP hydrolysis, probably effectuated by UreG. This is Urease accessory protein UreG from Blochmanniella pennsylvanica (strain BPEN).